Consider the following 1167-residue polypeptide: RNA-directed RNA polymerase (1167 aa).

The RdRp catalytic domain maps to 553-735; that stretch reads LTYGILAEAT…KALASYTGLE (183 aa).

Belongs to the reoviridae RNA-directed RNA polymerase family. As to quaternary structure, interacts with VP3 (Potential). Interacts with VP2 (Potential). Interacts with NSP5; this interaction is probably necessary for the formation of functional virus factories.

It is found in the virion. It carries out the reaction RNA(n) + a ribonucleoside 5'-triphosphate = RNA(n+1) + diphosphate. Its function is as follows. RNA-directed RNA polymerase that is involved in both transcription and genome replication. Together with VP3 capping enzyme, forms an enzyme complex positioned near the channels situated at each of the five-fold vertices of the core. Following infection, the outermost layer of the virus is lost, leaving a double-layered particle (DLP) made up of the core and VP6 shell. VP1 then catalyzes the transcription of fully conservative plus-strand genomic RNAs that are extruded through the DLP's channels into the cytoplasm where they function as mRNAs for translation of viral proteins. One copy of each of the viral (+)RNAs is also recruited during core assembly, together with newly synthesized polymerase complexes and VP2. The polymerase of these novo-formed particles catalyzes the synthesis of complementary minus-strands leading to dsDNA formation. To do so, the polymerase specifically recognizes conserved 3' sequence(s) in plus-strand RNA templates. Once dsRNA synthesis is complete, the polymerase switches to the transcriptional mode, thus providing secondary transcription. The chain is RNA-directed RNA polymerase from Rotavirus X (isolate RVX/Human/Bangladesh/NADRV-B219/2002/GXP[X]) (RV ADRV-N).